The primary structure comprises 315 residues: Glycine--tRNA ligase alpha subunit (315 aa).

Belongs to the class-II aminoacyl-tRNA synthetase family. Tetramer of two alpha and two beta subunits.

Its subcellular location is the cytoplasm. It catalyses the reaction tRNA(Gly) + glycine + ATP = glycyl-tRNA(Gly) + AMP + diphosphate. This is Glycine--tRNA ligase alpha subunit from Ectopseudomonas mendocina (strain ymp) (Pseudomonas mendocina).